The following is a 207-amino-acid chain: dTTP/UTP pyrophosphatase (207 aa).

Aspartate 79 serves as the catalytic Proton acceptor.

Belongs to the Maf family. YhdE subfamily. Requires a divalent metal cation as cofactor.

The protein localises to the cytoplasm. The enzyme catalyses dTTP + H2O = dTMP + diphosphate + H(+). The catalysed reaction is UTP + H2O = UMP + diphosphate + H(+). Functionally, nucleoside triphosphate pyrophosphatase that hydrolyzes dTTP and UTP. May have a dual role in cell division arrest and in preventing the incorporation of modified nucleotides into cellular nucleic acids. This is dTTP/UTP pyrophosphatase from Rhodopseudomonas palustris (strain HaA2).